Consider the following 275-residue polypeptide: Catechol 1,2-dioxygenase 2 (275 aa).

The Fe cation site is built by Y158, Y192, H216, and H218.

It belongs to the intradiol ring-cleavage dioxygenase family. As to quaternary structure, homodimer. Fe(3+) is required as a cofactor.

The catalysed reaction is catechol + O2 = cis,cis-muconate + 2 H(+). It functions in the pathway aromatic compound metabolism; beta-ketoadipate pathway; 5-oxo-4,5-dihydro-2-furylacetate from catechol: step 1/3. Can cleave 4-methyl-, 4-chloro-, and 3-methoxycatechol at lower rates than catechol, but has no activity with 4-nitrocatechol or protocatechuic acid. In Acinetobacter lwoffii, this protein is Catechol 1,2-dioxygenase 2 (catA2).